We begin with the raw amino-acid sequence, 202 residues long: Small ribosomal subunit protein uS5 (202 aa).

Residues 1–13 (MPGQQRRGGGSGG) show a composition bias toward gly residues. Residues 1–31 (MPGQQRRGGGSGGSDRRERRDRSGGGPAQEK) are disordered. Basic and acidic residues predominate over residues 14–23 (SDRRERRDRS). The 64-residue stretch at 34 to 97 (YVERVVAINR…EEAKKHFFKV (64 aa)) folds into the S5 DRBM domain.

This sequence belongs to the universal ribosomal protein uS5 family. Part of the 30S ribosomal subunit. Contacts proteins S4 and S8.

In terms of biological role, with S4 and S12 plays an important role in translational accuracy. Functionally, located at the back of the 30S subunit body where it stabilizes the conformation of the head with respect to the body. The sequence is that of Small ribosomal subunit protein uS5 from Frankia alni (strain DSM 45986 / CECT 9034 / ACN14a).